Reading from the N-terminus, the 21-residue chain is Dart gland peptide (21 aa).

A disordered region spans residues 1-21; the sequence is SINNTGGSGNRRLDKNGFAGQ. N-linked (GlcNAc...) asparagine glycosylation is present at asparagine 3.

The protein localises to the secreted. The sequence is that of Dart gland peptide from Cornu aspersum (Brown garden snail).